Here is a 401-residue protein sequence, read N- to C-terminus: MKILVMNCGSSSLKYQLLDMDNGKVLAKGLAERIGINDSLLTHQVEGKDKIKIQKDMKNHKEAIQIVLEALVDKEIGILKDMKEIDAVGHRVVHGGEFFTDSVLIDDEVIKKLEACIDLAPLHNPANIEGIKACRQIMPGVPMVAVFDTAFHQTMPDYAYIYPIPYEYYEKYRIRRYGFHGTSHKYVSLRAAEILKRPIEELKIITCHLGNGSSIAAVKGGKSIDTSMGFTPLEGLAMGTRSGNVDPSIITFLMEKEGLTAEQVIDILNKKSGVYGISGISNDFRDIENAAFKEGHKRAMLALKVFAYRVKKTIGSYTAAMGGVDVIVFTAGVGENGPEMREFILEDLEFLGFKLDKEKNKVRGKEEIISTEDSKVKVMVIPTNEEYMIAKDTEKLVKGLK.

A Mg(2+)-binding site is contributed by asparagine 7. Lysine 14 contributes to the ATP binding site. Arginine 91 contributes to the substrate binding site. Residue aspartate 148 is the Proton donor/acceptor of the active site. ATP is bound by residues 208–212 (HLGNG), 283–285 (DFR), and 332–336 (GVGEN). Position 385 (glutamate 385) interacts with Mg(2+).

This sequence belongs to the acetokinase family. Homodimer. Mg(2+) serves as cofactor. It depends on Mn(2+) as a cofactor.

The protein localises to the cytoplasm. The catalysed reaction is acetate + ATP = acetyl phosphate + ADP. The protein operates within metabolic intermediate biosynthesis; acetyl-CoA biosynthesis; acetyl-CoA from acetate: step 1/2. Its function is as follows. Catalyzes the formation of acetyl phosphate from acetate and ATP. Can also catalyze the reverse reaction. This chain is Acetate kinase, found in Thermoanaerobacter pseudethanolicus (strain ATCC 33223 / 39E) (Clostridium thermohydrosulfuricum).